A 218-amino-acid chain; its full sequence is Adenylate kinase (218 aa).

Residue 10–15 (GAGKGT) participates in ATP binding. The NMP stretch occupies residues 30–59 (STGDMLRAAVKAGTPLGQQAKAVMESGGLV). AMP-binding positions include threonine 31, arginine 36, 57–59 (GLV), 85–88 (GFPR), and glutamine 92. The LID stretch occupies residues 122 to 159 (GRRSHPASGRTYHVKFNPPKVEGKDDITGEDLIQRKDD). ATP contacts are provided by residues arginine 123 and 132 to 133 (TY). The AMP site is built by arginine 156 and arginine 167. Glycine 203 contributes to the ATP binding site.

The protein belongs to the adenylate kinase family. As to quaternary structure, monomer.

It is found in the cytoplasm. It catalyses the reaction AMP + ATP = 2 ADP. The protein operates within purine metabolism; AMP biosynthesis via salvage pathway; AMP from ADP: step 1/1. In terms of biological role, catalyzes the reversible transfer of the terminal phosphate group between ATP and AMP. Plays an important role in cellular energy homeostasis and in adenine nucleotide metabolism. In Variovorax paradoxus (strain S110), this protein is Adenylate kinase.